We begin with the raw amino-acid sequence, 312 residues long: Dihydroorotate dehydrogenase B (NAD(+)), catalytic subunit (312 aa).

FMN-binding positions include Ser23 and Lys47–Ala48. Substrate is bound by residues Lys47 and Asn71–Leu75. FMN contacts are provided by Asn102 and Asn130. Asn130 serves as a coordination point for substrate. Cys133 functions as the Nucleophile in the catalytic mechanism. Positions 168 and 194 each coordinate FMN. Asn195–Thr196 contacts substrate. Residues Gly220, Gly246–Gly247, and Gly268–Thr269 each bind FMN.

The protein belongs to the dihydroorotate dehydrogenase family. Type 1 subfamily. Heterotetramer of 2 PyrK and 2 PyrD type B subunits. The cofactor is FMN.

It localises to the cytoplasm. The enzyme catalyses (S)-dihydroorotate + NAD(+) = orotate + NADH + H(+). It functions in the pathway pyrimidine metabolism; UMP biosynthesis via de novo pathway; orotate from (S)-dihydroorotate (NAD(+) route): step 1/1. Functionally, catalyzes the conversion of dihydroorotate to orotate with NAD(+) as electron acceptor. The protein is Dihydroorotate dehydrogenase B (NAD(+)), catalytic subunit (pyrDB) of Enterococcus faecalis (strain ATCC 47077 / OG1RF).